We begin with the raw amino-acid sequence, 649 residues long: Quinol oxidase subunit 1 (649 aa).

The Extracellular segment spans residues 1–13 (MKFKWDEFFVTGD). Residues 14–34 (PLILGAQVSIALSTIAIIFVL) traverse the membrane as a helical segment. Over 35 to 55 (TYFKKWKWLWSEWITTVDHKK) the chain is Cytoplasmic. Residues 56-76 (LGIMYIISAVIMLFRGGVDGL) form a helical membrane-spanning segment. Topologically, residues 77-104 (MMRAQLALPNNSFLDSNHYNEIFTTHGT) are extracellular. H102 contacts Fe(II)-heme a. Residues 105–125 (IMIIFMAMPFLIGLINVVVPL) form a helical membrane-spanning segment. Residues 126–139 (QIGARDVAFPYLNN) lie on the Cytoplasmic side of the membrane. Residues 140–160 (LSFWTFFVGAMLFNISFVIGG) form a helical membrane-spanning segment. Residues 161–187 (SPNAGWTSYMPLASNDMSPGPGENYYL) are Extracellular-facing. The chain crosses the membrane as a helical span at residues 188–208 (LGLQIAGIGTLMTGINFMVTI). Residues 209 to 228 (LKMRTKGMTLMRMPMFTWTT) lie on the Cytoplasmic side of the membrane. The helical transmembrane segment at 229–249 (LITMVIIVFAFPVLTVALALL) threads the bilayer. At 250-273 (SFDRLFGAHFFTLEAGGMPMLWAN) the chain is on the extracellular side. A helical membrane pass occupies residues 274–294 (LFWIWGHPEVYIVILPAFGIF). Cu cation is bound by residues H280 and Y284. Residues 280–284 (HPEVY) constitute a cross-link (1'-histidyl-3'-tyrosine (His-Tyr)). Residues 295 to 305 (SEIISSFARKQ) are Cytoplasmic-facing. A helical membrane pass occupies residues 306-326 (LFGYTAMVGSIIAISVLSFLV). Over 327–342 (WTHHFFTMGNSASVNS) the chain is Extracellular. 2 residues coordinate Cu cation: H329 and H330. Residues 343–363 (FFSITTMAISIPTGVKIFNWL) form a helical membrane-spanning segment. Residues 364-376 (FTMYKGRISFTTP) are Cytoplasmic-facing. A helical transmembrane segment spans residues 377–397 (MLWALAFIPNFVIGGVTGVML). Topologically, residues 398 to 415 (AMAAADYQYHNTYFLVSH) are extracellular. Residue H415 participates in heme a3 binding. Residues 416–436 (FHYVLIAGTVFACFAGFIFWY) traverse the membrane as a helical segment. H417 serves as a coordination point for Fe(II)-heme a. The Cytoplasmic segment spans residues 437-451 (PKMFGHKLNERIGKW). A helical transmembrane segment spans residues 452 to 472 (FFWIFMIGFNICFFPQYFLGL). The Extracellular portion of the chain corresponds to 473 to 492 (QGMPRRIYTYGPNDGWTTLN). The chain crosses the membrane as a helical span at residues 493 to 513 (FISTVGAFMMGVGFLILCYNI). Residues 514 to 585 (YYSFRYSTRE…KFKKIHMPSN (72 aa)) lie on the Cytoplasmic side of the membrane. A helical transmembrane segment spans residues 586 to 603 (SGRPFFMSVAFGIAGFGL). At 604–606 (VFE) the chain is on the extracellular side. The chain crosses the membrane as a helical span at residues 607–624 (WYWMGVVGLIGVLLCMVL). The Cytoplasmic segment spans residues 625-649 (RSFEYDNGYYISVDEIKETERKISE).

Belongs to the heme-copper respiratory oxidase family. The cofactor is Cu cation. Ferriheme a serves as cofactor. Heme A3. is required as a cofactor.

It is found in the cell membrane. The enzyme catalyses 2 a quinol + O2 = 2 a quinone + 2 H2O. Its pathway is energy metabolism; oxidative phosphorylation. Catalyzes quinol oxidation with the concomitant reduction of oxygen to water. Major component for energy conversion during vegetative growth. This chain is Quinol oxidase subunit 1 (qoxB), found in Bacillus spizizenii (strain ATCC 23059 / NRRL B-14472 / W23) (Bacillus subtilis subsp. spizizenii).